The sequence spans 692 residues: DNA topoisomerase 4 subunit B (692 aa).

ATP-binding positions include Tyr53, Asn93, Asp120, 162–168 (GLHGVGI), and Lys393. The region spanning 473-587 (AELFIVEGDS…AGHLYLAVPP (115 aa)) is the Toprim domain. 3 residues coordinate Mg(2+): Glu479, Asp552, and Asp554.

The protein belongs to the type II topoisomerase family. ParE type 1 subfamily. As to quaternary structure, heterotetramer composed of ParC and ParE. It depends on Mg(2+) as a cofactor. Requires Mn(2+) as cofactor. The cofactor is Ca(2+).

The enzyme catalyses ATP-dependent breakage, passage and rejoining of double-stranded DNA.. Functionally, topoisomerase IV is essential for chromosome segregation. It relaxes supercoiled DNA. Performs the decatenation events required during the replication of a circular DNA molecule. The polypeptide is DNA topoisomerase 4 subunit B (Bartonella bacilliformis (strain ATCC 35685 / KC583 / Herrer 020/F12,63)).